Here is a 578-residue protein sequence, read N- to C-terminus: Laccase-10 (578 aa).

Positions 1-29 (MGARCLALLLLYGTLLLLLLLPQLPLAGA) are cleaved as a signal peptide. 2 Plastocyanin-like domains span residues 37–153 (NVKL…PKAG) and 163–319 (KDVP…YAPP). Asn42 and Asn83 each carry an N-linked (GlcNAc...) asparagine glycan. Positions 87 and 89 each coordinate Cu cation. N-linked (GlcNAc...) asparagine glycosylation is present at Asn119. His132 and His134 together coordinate Cu cation. N-linked (GlcNAc...) asparagine glycosylation is found at Asn192, Asn208, Asn244, Asn307, Asn336, Asn384, Asn392, Asn402, Asn438, Asn445, Asn448, Asn451, and Asn461. The region spanning 428–562 (DFPASPLEPF…KMAWVVNDGP (135 aa)) is the Plastocyanin-like 3 domain. 7 residues coordinate Cu cation: His479, His482, His484, His541, Cys542, His543, and His547.

It belongs to the multicopper oxidase family. Requires Cu cation as cofactor.

Its subcellular location is the secreted. The protein resides in the extracellular space. It localises to the apoplast. The enzyme catalyses 4 hydroquinone + O2 = 4 benzosemiquinone + 2 H2O. In terms of biological role, lignin degradation and detoxification of lignin-derived products. The chain is Laccase-10 (LAC10) from Oryza sativa subsp. japonica (Rice).